A 181-amino-acid chain; its full sequence is MNRKEKTAIIQQLTESFKSHDCFYIVDSTKLSVQATNQFRRDCHQAGVTYKVAKNTLILKALDEVPHMASDVYTSLRDEVLKGFSGILFFNETASVPAKLVKEFRKQKNLDRPILKGAYIDGELFVGDENLEALSQLKSKQVLIGEIITLLQSPMANVLSALQSGKNQLSGIIKTLGDRSE.

It belongs to the universal ribosomal protein uL10 family. Part of the ribosomal stalk of the 50S ribosomal subunit. The N-terminus interacts with L11 and the large rRNA to form the base of the stalk. The C-terminus forms an elongated spine to which L12 dimers bind in a sequential fashion forming a multimeric L10(L12)X complex.

Its function is as follows. Forms part of the ribosomal stalk, playing a central role in the interaction of the ribosome with GTP-bound translation factors. In Amoebophilus asiaticus (strain 5a2), this protein is Large ribosomal subunit protein uL10.